The primary structure comprises 387 residues: Mannitol-1-phosphate 5-dehydrogenase (387 aa).

NAD(+) is bound at residue 3–14 (AVHFGAGNIGRG).

It belongs to the mannitol dehydrogenase family.

It carries out the reaction D-mannitol 1-phosphate + NAD(+) = beta-D-fructose 6-phosphate + NADH + H(+). This Pseudarthrobacter chlorophenolicus (strain ATCC 700700 / DSM 12829 / CIP 107037 / JCM 12360 / KCTC 9906 / NCIMB 13794 / A6) (Arthrobacter chlorophenolicus) protein is Mannitol-1-phosphate 5-dehydrogenase.